A 136-amino-acid polypeptide reads, in one-letter code: MSRILKMNGRRQMWSQLQNEIILNDTVHINGFEGIGGMNRPVFMCRKLFVDNCDKNFIFYRLNKYSFPNVRELWLASHPTDPEVIHRPFDKIYLLDQYKYLQRYWAPRNTDIESVSYGRYLVELFAYYPENIKLHP.

Belongs to the mimivirus L163/R849 family.

This is an uncharacterized protein from Acanthamoeba polyphaga mimivirus (APMV).